The chain runs to 310 residues: Nitric oxide synthase-interacting protein homolog (310 aa).

The span at 115–124 (FSAIESTPSR) shows a compositional bias: polar residues. Residues 115–141 (FSAIESTPSRTGAVATPRPEVGSLKRQ) form a disordered region.

Belongs to the NOSIP family.

The protein resides in the cytoplasm. It is found in the nucleus. Its function is as follows. Negatively regulates nitric oxide production by inducing nitric oxide synthase translocation to actin cytoskeleton and inhibiting its enzymatic activity. This Caenorhabditis elegans protein is Nitric oxide synthase-interacting protein homolog.